A 370-amino-acid chain; its full sequence is MSIDGILERAVNGERLSMEDAVKLYESDEVEKMGAAANQIMLKWHPEPITTFVIGRNVNYTNFCDTYCRFCAFYRAPGHKEGYVLDDEVILKKIQETIDVGGTEILMQGGTNPDLTIDYYTDLLRNIKERFPNIWMHSFSPAEVWKIAEVSSMSVEEVLRELHEAGLDSMPGGGAEILTEETRLRVSRLKITWEQWINAMKATKKVGMHGTATMVIGFGESFEERALHLQRVRDAQDETECFTAFISWLFQPENTGMYKTKKLTPRDYLKNVAISRLFLDNIPNFQSSWVTMGPEVGKLSLQYGCNDFGSTMIEENVVSAAGTTHKVNTNKILQLIREAGKIPAQRTTSYEIIRTFEDKEAAEKDFVMQN.

The region spanning 50-295 is the Radical SAM core domain; sequence TTFVIGRNVN…QSSWVTMGPE (246 aa). [4Fe-4S] cluster is bound by residues C64, C68, and C71.

The protein belongs to the radical SAM superfamily. MqnC family. It depends on [4Fe-4S] cluster as a cofactor.

The enzyme catalyses dehypoxanthine futalosine + S-adenosyl-L-methionine = cyclic dehypoxanthinylfutalosinate + 5'-deoxyadenosine + L-methionine + H(+). Its pathway is quinol/quinone metabolism; menaquinone biosynthesis. Radical SAM enzyme that catalyzes the cyclization of dehypoxanthine futalosine (DHFL) into cyclic dehypoxanthine futalosine (CDHFL), a step in the biosynthesis of menaquinone (MK, vitamin K2). This is Cyclic dehypoxanthine futalosine synthase from Halalkalibacterium halodurans (strain ATCC BAA-125 / DSM 18197 / FERM 7344 / JCM 9153 / C-125) (Bacillus halodurans).